Here is a 335-residue protein sequence, read N- to C-terminus: Glyceraldehyde-3-phosphate dehydrogenase (335 aa).

NAD(+) contacts are provided by residues 13-14 and Gly111; that span reads TI. 140–142 serves as a coordination point for D-glyceraldehyde 3-phosphate; the sequence is SCN. Cys141 acts as the Nucleophile in catalysis. Arg169 lines the NAD(+) pocket. D-glyceraldehyde 3-phosphate contacts are provided by residues Thr171 and 195–196; that span reads HG. Residue Gln300 participates in NAD(+) binding.

It belongs to the glyceraldehyde-3-phosphate dehydrogenase family. In terms of assembly, homotetramer.

It localises to the cytoplasm. It catalyses the reaction D-glyceraldehyde 3-phosphate + phosphate + NADP(+) = (2R)-3-phospho-glyceroyl phosphate + NADPH + H(+). It carries out the reaction D-glyceraldehyde 3-phosphate + phosphate + NAD(+) = (2R)-3-phospho-glyceroyl phosphate + NADH + H(+). It participates in carbohydrate degradation; glycolysis; pyruvate from D-glyceraldehyde 3-phosphate: step 1/5. The protein is Glyceraldehyde-3-phosphate dehydrogenase of Methanosarcina mazei (strain ATCC BAA-159 / DSM 3647 / Goe1 / Go1 / JCM 11833 / OCM 88) (Methanosarcina frisia).